Here is a 300-residue protein sequence, read N- to C-terminus: GTPase Era (300 aa).

The Era-type G domain maps to 5–176 (RSGFVCLIGR…IDVLAAALPP (172 aa)). A G1 region spans residues 13 to 20 (GRPNTGKS). 13 to 20 (GRPNTGKS) contributes to the GTP binding site. The segment at 39-43 (QTTRH) is G2. Positions 61-64 (DTPG) are G3. GTP is bound by residues 61-65 (DTPGL) and 125-128 (TKID). Residues 125–128 (TKID) are G4. A G5 region spans residues 155 to 157 (VSA). The region spanning 207–286 (VHDELPHSLA…YLDLHVNVAK (80 aa)) is the KH type-2 domain.

Belongs to the TRAFAC class TrmE-Era-EngA-EngB-Septin-like GTPase superfamily. Era GTPase family. Monomer.

It localises to the cell envelope. It is found in the secreted. The protein resides in the cell wall. Functionally, exhibits GTPase activity. Binds RNA but is probably not involved in ribosome assembly in mycobacteria. The protein is GTPase Era of Mycobacterium leprae (strain TN).